Reading from the N-terminus, the 262-residue chain is 1-(5-phosphoribosyl)-5-[(5-phosphoribosylamino)methylideneamino] imidazole-4-carboxamide isomerase (262 aa).

The active-site Proton acceptor is D8. D129 (proton donor) is an active-site residue. The interval 243-262 (KDNVGQEDHSLPRCEPGPRG) is disordered.

Belongs to the HisA/HisF family.

It localises to the cytoplasm. It catalyses the reaction 1-(5-phospho-beta-D-ribosyl)-5-[(5-phospho-beta-D-ribosylamino)methylideneamino]imidazole-4-carboxamide = 5-[(5-phospho-1-deoxy-D-ribulos-1-ylimino)methylamino]-1-(5-phospho-beta-D-ribosyl)imidazole-4-carboxamide. Its pathway is amino-acid biosynthesis; L-histidine biosynthesis; L-histidine from 5-phospho-alpha-D-ribose 1-diphosphate: step 4/9. The protein is 1-(5-phosphoribosyl)-5-[(5-phosphoribosylamino)methylideneamino] imidazole-4-carboxamide isomerase of Desulforudis audaxviator (strain MP104C).